The following is a 90-amino-acid chain: N(2)-fixation sustaining protein CowN (90 aa).

Belongs to the CowN family.

In terms of biological role, is required to sustain N(2)-dependent growth in the presence of low levels of carbon monoxide (CO). Probably acts by protecting the N(2) fixation ability of the nitrogenase complex, which is inactivated in the presence of CO. The chain is N(2)-fixation sustaining protein CowN from Halorhodospira halophila (strain DSM 244 / SL1) (Ectothiorhodospira halophila (strain DSM 244 / SL1)).